Consider the following 561-residue polypeptide: MEPLQQQQQQQQQQQKQPHLAPLQMDAREKQGQQMREAQFLYAQKLVTQPTLLSATAGRPSGSTPLGPLARVPPTAAVAQVFERGNMNSEPEEEDGGLEDEDGDDEVAEVAEKETQAASKYFHVQKVARQDPRVAPMSNLLPAPGLPPHGQQAKEDHTKDASKASPSVSTAGQPNWNLDEQLKQNGGLAWSDDADGGRGREISRDFAKLYELDGDPERKEFLDDLFVFMQKRGTPINRIPIMAKQILDLYMLYKLVTEKGGLVEIINKKIWREITKGLNLPTSITSAAFTLRTQYMKYLYAYECEKKALSSPAELQAAIDGNRREGRRPSYSSSLFGYSPAAATAAAAAGAPALLSPPKIRFPILGLGSSSGTNTSSPRISPATTLRKGDGAPVTTVPVPNRLAVPVTLASQQAGTRTAALEQLRERLESGEPAEKKASRLSEEEQRLVQQAFQRNFFSMARQLPMKIRINGRAEDRAEASAAALNLTTSSIGSINMSVDIDGTTYAGVLFAQKPVVHLITGSAPQSLGSSASSSSSSHCSPSPTSSRGTPSAEPSTSWSL.

M1 bears the N-acetylmethionine mark. Residues 1-17 (MEPLQQQQQQQQQQQKQ) show a composition bias toward low complexity. Disordered stretches follow at residues 1-36 (MEPLQQQQQQQQQQQKQPHLAPLQMDAREKQGQQMR), 53-122 (LSAT…SKYF), and 136-179 (PMSN…WNLD). A Phosphoserine modification is found at S89. Over residues 90–109 (EPEEEDGGLEDEDGDDEVAE) the composition is skewed to acidic residues. The span at 152-162 (QAKEDHTKDAS) shows a compositional bias: basic and acidic residues. Positions 164 to 178 (ASPSVSTAGQPNWNL) are enriched in polar residues. At S165 the chain carries Phosphoserine. Residues 203 to 365 (SRDFAKLYEL…SPPKIRFPIL (163 aa)) form an interaction with RB1 region. One can recognise an ARID domain in the interval 215–307 (DPERKEFLDD…YLYAYECEKK (93 aa)). The residue at position 311 (S311) is a Phosphoserine. R361 carries the asymmetric dimethylarginine modification. The segment at 370 to 397 (SSGTNTSSPRISPATTLRKGDGAPVTTV) is disordered. The region spanning 419-517 (AALEQLRERL…GVLFAQKPVV (99 aa)) is the REKLES domain. Residues 490–513 (SSIGSINMSVDIDGTTYAGVLFAQ) are interaction with ARID3A. A compositionally biased stretch (low complexity) spans 523-552 (SAPQSLGSSASSSSSSHCSPSPTSSRGTPS). The interval 523–561 (SAPQSLGSSASSSSSSHCSPSPTSSRGTPSAEPSTSWSL) is disordered.

Heterodimer with ARID3A. Interacts with unphosphorylated RB1. Expressed in placenta, testis and leukocytes. Expressed in neuroblastoma. Present in K-562 erythrocytic leukemia cell line (at protein level).

It localises to the nucleus. Its function is as follows. Transcription factor which may be involved in neuroblastoma growth and malignant transformation. Favors nuclear targeting of ARID3A. In Homo sapiens (Human), this protein is AT-rich interactive domain-containing protein 3B (ARID3B).